Reading from the N-terminus, the 321-residue chain is Glutathione synthetase (321 aa).

Positions Glu-125 to Glu-311 constitute an ATP-grasp domain. Phe-151 to Gly-208 provides a ligand contact to ATP. Positions 282 and 284 each coordinate Mg(2+).

This sequence belongs to the prokaryotic GSH synthase family. Requires Mg(2+) as cofactor. Mn(2+) serves as cofactor.

The enzyme catalyses gamma-L-glutamyl-L-cysteine + glycine + ATP = glutathione + ADP + phosphate + H(+). The protein operates within sulfur metabolism; glutathione biosynthesis; glutathione from L-cysteine and L-glutamate: step 2/2. This chain is Glutathione synthetase, found in Coxiella burnetii (strain RSA 493 / Nine Mile phase I).